Reading from the N-terminus, the 404-residue chain is Argininosuccinate synthase (404 aa).

ATP is bound at residue 7 to 15 (AYSGGLDTS). Residues Y85 and S90 each coordinate L-citrulline. Residue G115 coordinates ATP. Positions 117, 121, and 122 each coordinate L-aspartate. N121 provides a ligand contact to L-citrulline. Positions 125, 178, 187, 264, and 276 each coordinate L-citrulline.

The protein belongs to the argininosuccinate synthase family. Type 1 subfamily. In terms of assembly, homotetramer.

It localises to the cytoplasm. It catalyses the reaction L-citrulline + L-aspartate + ATP = 2-(N(omega)-L-arginino)succinate + AMP + diphosphate + H(+). It participates in amino-acid biosynthesis; L-arginine biosynthesis; L-arginine from L-ornithine and carbamoyl phosphate: step 2/3. The chain is Argininosuccinate synthase from Rhodopirellula baltica (strain DSM 10527 / NCIMB 13988 / SH1).